Reading from the N-terminus, the 331-residue chain is GTP 3',8-cyclase (331 aa).

A Radical SAM core domain is found at 9 to 233 (SFGRQVTYVR…TATNEHTGGP (225 aa)). Arg18 is a GTP binding site. The [4Fe-4S] cluster site is built by Cys25 and Cys29. Tyr31 is an S-adenosyl-L-methionine binding site. Cys32 contributes to the [4Fe-4S] cluster binding site. Residue Arg67 coordinates GTP. Gly71 is an S-adenosyl-L-methionine binding site. GTP is bound at residue Thr98. Ser122 is a binding site for S-adenosyl-L-methionine. Lys159 lines the GTP pocket. Residue Met193 participates in S-adenosyl-L-methionine binding. [4Fe-4S] cluster contacts are provided by Cys257 and Cys260. 262 to 264 (RVR) contacts GTP. Cys274 provides a ligand contact to [4Fe-4S] cluster.

This sequence belongs to the radical SAM superfamily. MoaA family. As to quaternary structure, monomer and homodimer. [4Fe-4S] cluster is required as a cofactor.

It carries out the reaction GTP + AH2 + S-adenosyl-L-methionine = (8S)-3',8-cyclo-7,8-dihydroguanosine 5'-triphosphate + 5'-deoxyadenosine + L-methionine + A + H(+). It functions in the pathway cofactor biosynthesis; molybdopterin biosynthesis. Functionally, catalyzes the cyclization of GTP to (8S)-3',8-cyclo-7,8-dihydroguanosine 5'-triphosphate. This chain is GTP 3',8-cyclase, found in Saccharophagus degradans (strain 2-40 / ATCC 43961 / DSM 17024).